We begin with the raw amino-acid sequence, 36 residues long: GLIDVRCYASRECWEPCRKVTGSGQAKCQNNQCRCY.

3 disulfide bridges follow: Cys7–Cys28, Cys13–Cys33, and Cys17–Cys35.

This sequence belongs to the short scorpion toxin superfamily. Potassium channel inhibitor family. Alpha-KTx 16 subfamily. In terms of tissue distribution, expressed by the venom gland.

It localises to the secreted. In terms of biological role, poorly competes with (125)I-kaliotoxin binding on rat brain synaptosome (IC(50)&gt;100 nM). Is a poor Kv1.3/KCNA3 ligand. May have as real target KCa1.1/KCNMA1 channel. Shows weak toxicity on mice. The chain is Potassium channel toxin alpha-KTx 16.9 from Buthus paris (Scorpion).